An 88-amino-acid chain; its full sequence is DNA-directed RNA polymerase subunit omega (88 aa).

The protein belongs to the RNA polymerase subunit omega family. The RNAP catalytic core consists of 2 alpha, 1 beta, 1 beta' and 1 omega subunit. When a sigma factor is associated with the core the holoenzyme is formed, which can initiate transcription.

The enzyme catalyses RNA(n) + a ribonucleoside 5'-triphosphate = RNA(n+1) + diphosphate. Its function is as follows. Promotes RNA polymerase assembly. Latches the N- and C-terminal regions of the beta' subunit thereby facilitating its interaction with the beta and alpha subunits. The protein is DNA-directed RNA polymerase subunit omega of Haemophilus influenzae (strain 86-028NP).